A 342-amino-acid polypeptide reads, in one-letter code: Succinylglutamate desuccinylase (342 aa).

His63, Glu66, and His155 together coordinate Zn(2+). The active site involves Glu219.

Belongs to the AspA/AstE family. Succinylglutamate desuccinylase subfamily. The cofactor is Zn(2+).

It carries out the reaction N-succinyl-L-glutamate + H2O = L-glutamate + succinate. It functions in the pathway amino-acid degradation; L-arginine degradation via AST pathway; L-glutamate and succinate from L-arginine: step 5/5. Functionally, transforms N(2)-succinylglutamate into succinate and glutamate. The sequence is that of Succinylglutamate desuccinylase from Vibrio campbellii (strain ATCC BAA-1116).